A 79-amino-acid chain; its full sequence is Acyl carrier protein (79 aa).

In terms of domain architecture, Carrier spans Glu-2 to Leu-77. Ser-37 carries the O-(pantetheine 4'-phosphoryl)serine modification.

Belongs to the acyl carrier protein (ACP) family. In terms of processing, 4'-phosphopantetheine is transferred from CoA to a specific serine of apo-ACP by AcpS. This modification is essential for activity because fatty acids are bound in thioester linkage to the sulfhydryl of the prosthetic group.

The protein resides in the cytoplasm. Its pathway is lipid metabolism; fatty acid biosynthesis. Carrier of the growing fatty acid chain in fatty acid biosynthesis. This is Acyl carrier protein from Azoarcus sp. (strain BH72).